The primary structure comprises 393 residues: Methylthioribose kinase (393 aa).

Residues Asn-38, Lys-53, and 107–109 (EDL) contribute to the ATP site. Asp-225 provides a ligand contact to substrate. 242 to 244 (DPE) is an ATP binding site. Position 332 (Arg-332) interacts with substrate.

Belongs to the methylthioribose kinase family. As to quaternary structure, homodimer.

It carries out the reaction 5-(methylsulfanyl)-D-ribose + ATP = 5-(methylsulfanyl)-alpha-D-ribose 1-phosphate + ADP + H(+). It functions in the pathway amino-acid biosynthesis; L-methionine biosynthesis via salvage pathway; S-methyl-5-thio-alpha-D-ribose 1-phosphate from S-methyl-5'-thioadenosine (hydrolase route): step 2/2. Catalyzes the phosphorylation of methylthioribose into methylthioribose-1-phosphate. This chain is Methylthioribose kinase, found in Bacillus cereus (strain ATCC 14579 / DSM 31 / CCUG 7414 / JCM 2152 / NBRC 15305 / NCIMB 9373 / NCTC 2599 / NRRL B-3711).